A 312-amino-acid polypeptide reads, in one-letter code: MADFKHVSVLPAEVIAYLAPRPGGIYVDGTLGGAGHARLILEASAPDGLLIGFDQDGQALASAGERLAPFGKRVVLVKRNFAFLEEALAEIGIEAIDGFLLDVGVSSHQLDTVERGFSFQHDAPLDMRMDLSAETTAAELVNTLSEEDLCRVIREYGEERWAKRIAAFIIKRREETPIATTLQLVDVIKAAVPKGAWEVRLHPATRTFQALRIAVNDELASLEKGLSGGVRLLKKGGRGVVISFHSLEDRIAKTTFRSLAQGCKCPREIPRCVCGNLPQVKVLTGKPVVANEVEVSSNPRSRSARLRAVEKI.

S-adenosyl-L-methionine is bound by residues 34–36 (AGH), aspartate 54, phenylalanine 81, aspartate 102, and glutamine 109.

It belongs to the methyltransferase superfamily. RsmH family.

It is found in the cytoplasm. The catalysed reaction is cytidine(1402) in 16S rRNA + S-adenosyl-L-methionine = N(4)-methylcytidine(1402) in 16S rRNA + S-adenosyl-L-homocysteine + H(+). Specifically methylates the N4 position of cytidine in position 1402 (C1402) of 16S rRNA. The chain is Ribosomal RNA small subunit methyltransferase H from Geotalea daltonii (strain DSM 22248 / JCM 15807 / FRC-32) (Geobacter daltonii).